We begin with the raw amino-acid sequence, 93 residues long: Cell division protein FtsB (93 aa).

Residues 1–3 lie on the Cytoplasmic side of the membrane; it reads MRI. A helical membrane pass occupies residues 4–21; it reads FVIALTLLFGWLQYTLWF. The Periplasmic portion of the chain corresponds to 22-93; it reads GKNGVSDYYT…FYRIVDEEEH (72 aa). Residues 31–75 adopt a coiled-coil conformation; it reads TVEDEIEVQQQVNSKLQARNNEMFAEIDDLRQGLDAIEERARHEL.

Belongs to the FtsB family. As to quaternary structure, part of a complex composed of FtsB, FtsL and FtsQ.

The protein resides in the cell inner membrane. Functionally, essential cell division protein. May link together the upstream cell division proteins, which are predominantly cytoplasmic, with the downstream cell division proteins, which are predominantly periplasmic. This Vibrio campbellii (strain ATCC BAA-1116) protein is Cell division protein FtsB.